A 123-amino-acid polypeptide reads, in one-letter code: Highly acidic elicitin 20 (123 aa).

The first 20 residues, 1–20, serve as a signal peptide directing secretion; the sequence is MQFTALFAATAVALVGSVSA. Cystine bridges form between Cys23–Cys91, Cys47–Cys76, and Cys71–Cys115.

It belongs to the elicitin family.

Its subcellular location is the secreted. Functionally, induces local and distal defense responses (incompatible hypersensitive reaction) in plants from the solanaceae and cruciferae families. Elicits leaf necrosis and causes the accumulation of pathogenesis-related proteins. Might interact with the lipidic molecules of the plasma membrane. In Phytophthora cryptogea, this protein is Highly acidic elicitin 20 (B20).